Reading from the N-terminus, the 258-residue chain is Methionine aminopeptidase (258 aa).

Histidine 84 serves as a coordination point for substrate. Positions 102, 113, and 176 each coordinate a divalent metal cation. Histidine 183 serves as a coordination point for substrate. Positions 211 and 242 each coordinate a divalent metal cation.

It belongs to the peptidase M24A family. Methionine aminopeptidase type 1 subfamily. In terms of assembly, monomer. The cofactor is Co(2+). It depends on Zn(2+) as a cofactor. Mn(2+) serves as cofactor. Fe(2+) is required as a cofactor.

It catalyses the reaction Release of N-terminal amino acids, preferentially methionine, from peptides and arylamides.. Removes the N-terminal methionine from nascent proteins. The N-terminal methionine is often cleaved when the second residue in the primary sequence is small and uncharged (Met-Ala-, Cys, Gly, Pro, Ser, Thr, or Val). Requires deformylation of the N(alpha)-formylated initiator methionine before it can be hydrolyzed. The protein is Methionine aminopeptidase of Aquifex aeolicus (strain VF5).